Reading from the N-terminus, the 286-residue chain is Nucleotide-binding protein Tgr7_0722 (286 aa).

G8 to S15 lines the ATP pocket. A GTP-binding site is contributed by D60–S63.

This sequence belongs to the RapZ-like family.

Displays ATPase and GTPase activities. The protein is Nucleotide-binding protein Tgr7_0722 of Thioalkalivibrio sulfidiphilus (strain HL-EbGR7).